Consider the following 948-residue polypeptide: Phosphoenolpyruvate carboxylase (948 aa).

Residues His138 and Lys610 contribute to the active site.

This sequence belongs to the PEPCase type 1 family. Requires Mg(2+) as cofactor.

It carries out the reaction oxaloacetate + phosphate = phosphoenolpyruvate + hydrogencarbonate. Forms oxaloacetate, a four-carbon dicarboxylic acid source for the tricarboxylic acid cycle. This is Phosphoenolpyruvate carboxylase from Streptococcus sanguinis (strain SK36).